Reading from the N-terminus, the 1185-residue chain is Chromosome partition protein Smc (1185 aa).

ATP is bound at residue 32–39; sequence PNGSGKSN. A coiled-coil region spans residues 228–503; that stretch reads SRLVKKLTIA…LQAVQERYTN (276 aa). Residues 300–323 are disordered; it reads TQGQQGVDAERRQNQQSEQERLTA. The segment covering 307–320 has biased composition (basic and acidic residues); the sequence is DAERRQNQQSEQER. In terms of domain architecture, SMC hinge spans 519–637; sequence SGVAGAVSEL…VDTLDHAMAI (119 aa). Coiled coils occupy residues 675 to 928 and 989 to 1025; these read QQQQ…RRLE and AIDEFERVKERFDFLNNQASDLTEAKEHLLQTMADLD.

This sequence belongs to the SMC family. In terms of assembly, homodimer.

Its subcellular location is the cytoplasm. Its function is as follows. Required for chromosome condensation and partitioning. The polypeptide is Chromosome partition protein Smc (Lactiplantibacillus plantarum (strain ATCC BAA-793 / NCIMB 8826 / WCFS1) (Lactobacillus plantarum)).